The following is a 147-amino-acid chain: Lipoprotein YfjS (147 aa).

The signal sequence occupies residues 1 to 20 (MKRKTLPLLALVATSLFLSA). Residue Cys-21 is the site of N-palmitoyl cysteine attachment. Cys-21 carries S-diacylglycerol cysteine lipidation.

To E.coli YafY.

Its subcellular location is the cell inner membrane. Does not induce degP when overexpressed unless it is mutated to resemble YafY. The polypeptide is Lipoprotein YfjS (yfjS) (Escherichia coli (strain K12)).